A 242-amino-acid chain; its full sequence is Venom redulysin 2 (242 aa).

The first 19 residues, 1-19 (MSKIWILLLLVGAVQFARG), serve as a signal peptide directing secretion. Positions 20–46 (FPALEEEQEDDVIDWPSFEYDLSDEER) are excised as a propeptide.

It belongs to the redulysin-like family. Post-translationally, contains 5 disulfide bonds. As to expression, expressed by the venom gland (posterior main gland) (at protein level).

The protein localises to the secreted. Highly abundant protein that may be responsible for the observed disruption of sensory neuron membranes, since it is homologous to proteins such as trialysin, which forms pores in lipid bilayers. Probable insecticidal toxin. In Platymeris rhadamanthus (Red spot assassin bug), this protein is Venom redulysin 2.